We begin with the raw amino-acid sequence, 942 residues long: Small RNA 2'-O-methyltransferase (942 aa).

The DRBM domain maps to phenylalanine 19–isoleucine 87. Residues aspartate 93–glutamate 204 form the HTH La-type RNA-binding domain. Residues glutamate 505–glutamine 514 are compositionally biased toward acidic residues. Disordered regions lie at residues glutamate 505–asparagine 542 and proline 571–alanine 596. S-adenosyl-L-methionine is bound by residues serine 726, aspartate 745, serine 778 to isoleucine 779, and leucine 795. Residues glutamate 796, glutamate 799, and histidine 800 each coordinate Mg(2+). Positions arginine 837–arginine 856 are disordered. A Mg(2+)-binding site is contributed by histidine 860.

The protein belongs to the methyltransferase superfamily. HEN1 family. Binds small RNA duplexes as monomer. Mg(2+) is required as a cofactor. Expressed in stems, leaves and inflorescences.

The protein resides in the nucleus. The catalysed reaction is small RNA 3'-end nucleotide + S-adenosyl-L-methionine = small RNA 3'-end 2'-O-methylnucleotide + S-adenosyl-L-homocysteine + H(+). Its function is as follows. Methyltransferase that adds a methyl group to the ribose of the last nucleotide of small RNAs (sRNAs). This protects the 3'-end of sRNAs from uridylation activity and subsequent degradation. Can methylate 3'-end of microRNAs (miRNAs), small interfering RNAs (siRNas) and trans-acting small interfering RNAs (ta-siRNAs). Involved in plant development through its role in small RNAs processing. Required for the specification of reproductive organ identities and the probable repression of A class genes. May control floral determinacy possibly by regulating the expression of the C class floral homeotic gene AGAMOUS (AG). The protein is Small RNA 2'-O-methyltransferase (HEN1) of Arabidopsis thaliana (Mouse-ear cress).